A 532-amino-acid polypeptide reads, in one-letter code: Invertase 2 (532 aa).

The first 19 residues, 1–19 (MLLQAFLFLLAGFAAKISA), serve as a signal peptide directing secretion. N-linked (GlcNAc...) asparagine glycosylation is present at asparagine 23. Substrate is bound by residues 39–42 (WMND) and glutamine 60. Residue aspartate 42 is part of the active site. Residue asparagine 64 is glycosylated (N-linked (GlcNAc...) asparagine; partial). Asparagine 97 carries an N-linked (GlcNAc...) asparagine glycan. 102-103 (FS) is a substrate binding site. N-linked (GlcNAc...) asparagine glycans are attached at residues asparagine 111 and asparagine 118. Asparagine 165 carries an N-linked (GlcNAc...) asparagine; partial glycan. Substrate contacts are provided by residues 170–171 (RD) and glutamate 223. Asparagine 266 and asparagine 275 each carry an N-linked (GlcNAc...) asparagine; partial glycan. Residue tryptophan 311 participates in substrate binding. 4 N-linked (GlcNAc...) asparagine glycosylation sites follow: asparagine 356, asparagine 369, asparagine 384, and asparagine 398. A glycan (N-linked (GlcNAc...) asparagine; partial) is linked at asparagine 512.

The protein belongs to the glycosyl hydrolase 32 family. In terms of processing, isoform Secreted is glycosylated. Isoform Intracellular is not glycosylated.

The protein resides in the cytoplasm. The protein localises to the secreted. It carries out the reaction Hydrolysis of terminal non-reducing beta-D-fructofuranoside residues in beta-D-fructofuranosides.. The protein is Invertase 2 (SUC2) of Saccharomyces cerevisiae (strain ATCC 204508 / S288c) (Baker's yeast).